A 259-amino-acid chain; its full sequence is uncharacterized protein (259 aa).

This is an uncharacterized protein from Bacillus anthracis.